A 45-amino-acid chain; its full sequence is Photosystem II reaction center protein K (45 aa).

The propeptide occupies 1–8; the sequence is MEAALLLA. Residues 24 to 44 form a helical membrane-spanning segment; sequence LPIIPVFFLLLAFVWQAAVGF.

Belongs to the PsbK family. As to quaternary structure, PSII is composed of 1 copy each of membrane proteins PsbA, PsbB, PsbC, PsbD, PsbE, PsbF, PsbH, PsbI, PsbJ, PsbK, PsbL, PsbM, PsbT, PsbX, PsbY, PsbZ, Psb30/Ycf12, peripheral proteins PsbO, CyanoQ (PsbQ), PsbU, PsbV and a large number of cofactors. It forms dimeric complexes.

The protein resides in the cellular thylakoid membrane. One of the components of the core complex of photosystem II (PSII). PSII is a light-driven water:plastoquinone oxidoreductase that uses light energy to abstract electrons from H(2)O, generating O(2) and a proton gradient subsequently used for ATP formation. It consists of a core antenna complex that captures photons, and an electron transfer chain that converts photonic excitation into a charge separation. In Nostoc sp. (strain PCC 7120 / SAG 25.82 / UTEX 2576), this protein is Photosystem II reaction center protein K.